The primary structure comprises 111 residues: Microtubule nucleation factor SSNA1 (111 aa).

Residues 6-71 (QALQNHNNEL…ARKTETKNEY (66 aa)) are a coiled coil.

Belongs to the SSNA1 family. Self-assembles into fibrils in a head-to-tail fashion.

It localises to the cytoplasm. It is found in the cytoskeleton. Its subcellular location is the flagellum basal body. The protein resides in the flagellum axoneme. Its function is as follows. Microtubule-binding protein which stabilizes dynamic microtubules by slowing growth and shrinkage at both plus and minus ends and serves as a sensor of microtubule damage. Induces microtubule branching which is mediated by the formation of long SSNA1 fibrils which guide microtubule protofilaments to split apart from the mother microtubule and form daughter microtubules. Required for cell division. This chain is Microtubule nucleation factor SSNA1, found in Chlamydomonas reinhardtii (Chlamydomonas smithii).